Consider the following 600-residue polypeptide: Aspartate--tRNA(Asp/Asn) ligase (600 aa).

Position 187 (Glu187) interacts with L-aspartate. Residues 211–214 (QIFK) are aspartate. Arg233 and His463 together coordinate L-aspartate. 233-235 (RDE) serves as a coordination point for ATP. Glu497 is an ATP binding site. Arg504 contacts L-aspartate. An ATP-binding site is contributed by 549–552 (GIDR).

Belongs to the class-II aminoacyl-tRNA synthetase family. Type 1 subfamily. As to quaternary structure, homodimer.

Its subcellular location is the cytoplasm. The catalysed reaction is tRNA(Asx) + L-aspartate + ATP = L-aspartyl-tRNA(Asx) + AMP + diphosphate. Its function is as follows. Aspartyl-tRNA synthetase with relaxed tRNA specificity since it is able to aspartylate not only its cognate tRNA(Asp) but also tRNA(Asn). Reaction proceeds in two steps: L-aspartate is first activated by ATP to form Asp-AMP and then transferred to the acceptor end of tRNA(Asp/Asn). This chain is Aspartate--tRNA(Asp/Asn) ligase, found in Wolbachia sp. subsp. Brugia malayi (strain TRS).